Consider the following 87-residue polypeptide: Retinal rod rhodopsin-sensitive cGMP 3',5'-cyclic phosphodiesterase subunit gamma (87 aa).

Methionine 1 is modified (N-acetylmethionine). A compositionally biased stretch (basic and acidic residues) spans 1–12 (MNLEPPKAEIRS). The interval 1-55 (MNLEPPKAEIRSATRVMGGPVTPRKGPPKFKQRQTRQFKSKPPKKGVQGFGDDIP) is disordered. Positions 26–44 (GPPKFKQRQTRQFKSKPPK) are enriched in basic residues.

This sequence belongs to the rod/cone cGMP-PDE gamma subunit family. As to quaternary structure, oligomer composed of two catalytic chains (alpha and beta), an inhibitory chain (gamma) and the delta chain.

The catalysed reaction is 3',5'-cyclic GMP + H2O = GMP + H(+). Its function is as follows. Participates in processes of transmission and amplification of the visual signal. cGMP-PDEs are the effector molecules in G-protein-mediated phototransduction in vertebrate rods and cones. This Bos taurus (Bovine) protein is Retinal rod rhodopsin-sensitive cGMP 3',5'-cyclic phosphodiesterase subunit gamma (PDE6G).